Consider the following 183-residue polypeptide: Small ribosomal subunit protein bS20c (183 aa).

Residues 1-68 constitute a chloroplast transit peptide; sequence MAAISMACVS…FQRRGFSVVC (68 aa). The segment at 79-99 is disordered; that stretch reads AAKRTRQAETRRLRNKARKSE.

Component of the chloroplast small ribosomal subunit (SSU). Mature 70S chloroplast ribosomes of higher plants consist of a small (30S) and a large (50S) subunit. The 30S small subunit contains 1 molecule of ribosomal RNA (16S rRNA) and 24 different proteins. The 50S large subunit contains 3 rRNA molecules (23S, 5S and 4.5S rRNA) and 33 different proteins.

It is found in the plastid. The protein resides in the chloroplast. Functionally, component of the chloroplast ribosome (chloro-ribosome), a dedicated translation machinery responsible for the synthesis of chloroplast genome-encoded proteins, including proteins of the transcription and translation machinery and components of the photosynthetic apparatus. This chain is Small ribosomal subunit protein bS20c (RPS20), found in Spinacia oleracea (Spinach).